The sequence spans 333 residues: Bifunctional phosphoglucose/phosphomannose isomerase (333 aa).

The 139-residue stretch at 22–160 (LEGALEGVEE…SGALGVDLEA (139 aa)) folds into the SIS domain. Positions 39, 40, 84, 86, 89, and 136 each coordinate D-fructose 6-phosphate. The Proton acceptor role is filled by E211. D-fructose 6-phosphate contacts are provided by H227 and K322. The Proton donor role is filled by H227. The active-site Proton acceptor is K322.

It belongs to the PGI/PMI family. In terms of assembly, homodimer.

The enzyme catalyses alpha-D-glucose 6-phosphate = beta-D-fructose 6-phosphate. It carries out the reaction D-mannose 6-phosphate = D-fructose 6-phosphate. Inhibited by low concentrations of erythrose 4-phosphate and 6-phosphogluconate. Functionally, dual specificity isomerase that catalyzes the isomerization of both glucose-6-phosphate and mannose-6-phosphate to fructose-6-phosphate with similar catalytic efficiency. The protein is Bifunctional phosphoglucose/phosphomannose isomerase of Aeropyrum pernix (strain ATCC 700893 / DSM 11879 / JCM 9820 / NBRC 100138 / K1).